The sequence spans 311 residues: Formimidoylglutamase (311 aa).

Mn(2+) is bound by residues His122, Asp151, His153, Asp155, Cys242, and Asp244.

The protein belongs to the arginase family. It depends on Mn(2+) as a cofactor.

It catalyses the reaction N-formimidoyl-L-glutamate + H2O = formamide + L-glutamate. It participates in amino-acid degradation; L-histidine degradation into L-glutamate; L-glutamate from N-formimidoyl-L-glutamate (hydrolase route): step 1/1. Its function is as follows. Catalyzes the conversion of N-formimidoyl-L-glutamate to L-glutamate and formamide. In Pseudomonas paraeruginosa (strain DSM 24068 / PA7) (Pseudomonas aeruginosa (strain PA7)), this protein is Formimidoylglutamase.